The primary structure comprises 1524 residues: DNA-directed RNA polymerase subunit beta' (1524 aa).

Zn(2+)-binding residues include Cys58, Cys60, Cys73, and Cys76. 3 residues coordinate Mg(2+): Asp739, Asp741, and Asp743. Cys1112, Cys1194, Cys1201, and Cys1204 together coordinate Zn(2+). The tract at residues 1502–1524 (AVEAKEKEAPRRPVRREQPGKGL) is disordered.

It belongs to the RNA polymerase beta' chain family. As to quaternary structure, the RNAP catalytic core consists of 2 alpha, 1 beta, 1 beta' and 1 omega subunit. When a sigma factor is associated with the core the holoenzyme is formed, which can initiate transcription. It depends on Mg(2+) as a cofactor. The cofactor is Zn(2+).

It catalyses the reaction RNA(n) + a ribonucleoside 5'-triphosphate = RNA(n+1) + diphosphate. In terms of biological role, DNA-dependent RNA polymerase catalyzes the transcription of DNA into RNA using the four ribonucleoside triphosphates as substrates. This chain is DNA-directed RNA polymerase subunit beta', found in Thermus aquaticus.